Reading from the N-terminus, the 240-residue chain is UDP-2,3-diacylglucosamine hydrolase (240 aa).

Asp9, His11, Asp43, Asn81, and His116 together coordinate Mn(2+). 81–82 provides a ligand contact to substrate; sequence NR. Substrate contacts are provided by Asp124, Ser162, Lys166, Lys169, and His197. Mn(2+)-binding residues include His197 and His199.

It belongs to the LpxH family. It depends on Mn(2+) as a cofactor.

Its subcellular location is the cell inner membrane. The enzyme catalyses UDP-2-N,3-O-bis[(3R)-3-hydroxytetradecanoyl]-alpha-D-glucosamine + H2O = 2-N,3-O-bis[(3R)-3-hydroxytetradecanoyl]-alpha-D-glucosaminyl 1-phosphate + UMP + 2 H(+). The protein operates within glycolipid biosynthesis; lipid IV(A) biosynthesis; lipid IV(A) from (3R)-3-hydroxytetradecanoyl-[acyl-carrier-protein] and UDP-N-acetyl-alpha-D-glucosamine: step 4/6. Its function is as follows. Hydrolyzes the pyrophosphate bond of UDP-2,3-diacylglucosamine to yield 2,3-diacylglucosamine 1-phosphate (lipid X) and UMP by catalyzing the attack of water at the alpha-P atom. Involved in the biosynthesis of lipid A, a phosphorylated glycolipid that anchors the lipopolysaccharide to the outer membrane of the cell. The polypeptide is UDP-2,3-diacylglucosamine hydrolase (Neisseria meningitidis serogroup A / serotype 4A (strain DSM 15465 / Z2491)).